A 195-amino-acid chain; its full sequence is HTH-type transcriptional regulator BetI (195 aa).

The HTH tetR-type domain occupies 8 to 68 (SIRRRQLIDA…ATMRDITSQL (61 aa)). The H-T-H motif DNA-binding region spans 31 to 50 (TIAQIARRAGVSTGIISHYF).

It participates in amine and polyamine biosynthesis; betaine biosynthesis via choline pathway [regulation]. In terms of biological role, repressor involved in the biosynthesis of the osmoprotectant glycine betaine. It represses transcription of the choline transporter BetT and the genes of BetAB involved in the synthesis of glycine betaine. In Escherichia coli (strain SMS-3-5 / SECEC), this protein is HTH-type transcriptional regulator BetI.